A 234-amino-acid polypeptide reads, in one-letter code: UPF0173 metal-dependent hydrolase RHE_CH01853 (234 aa).

It belongs to the UPF0173 family.

The chain is UPF0173 metal-dependent hydrolase RHE_CH01853 from Rhizobium etli (strain ATCC 51251 / DSM 11541 / JCM 21823 / NBRC 15573 / CFN 42).